The primary structure comprises 450 residues: Bifunctional protein GlmU (450 aa).

The tract at residues 1-236 (MTAHKPFSAV…AWEVSGVNNR (236 aa)) is pyrophosphorylase. Residues 12-15 (LAAG), K26, Q79, 84-85 (GT), 107-109 (YGD), G147, E162, N177, and N234 each bind UDP-N-acetyl-alpha-D-glucosamine. A Mg(2+)-binding site is contributed by D109. N234 contributes to the Mg(2+) binding site. The linker stretch occupies residues 237–257 (AELASLESLWQNRKRQDVMKD). Residues 258–450 (GASLIAPETV…KKFRQRKKKK (193 aa)) are N-acetyltransferase. UDP-N-acetyl-alpha-D-glucosamine-binding residues include R323 and K341. The active-site Proton acceptor is the H353. UDP-N-acetyl-alpha-D-glucosamine is bound by residues Y356 and N367. Residues 376 to 377 (NY), S395, A413, and R430 contribute to the acetyl-CoA site.

In the N-terminal section; belongs to the N-acetylglucosamine-1-phosphate uridyltransferase family. This sequence in the C-terminal section; belongs to the transferase hexapeptide repeat family. In terms of assembly, homotrimer. Mg(2+) is required as a cofactor.

Its subcellular location is the cytoplasm. The catalysed reaction is alpha-D-glucosamine 1-phosphate + acetyl-CoA = N-acetyl-alpha-D-glucosamine 1-phosphate + CoA + H(+). It carries out the reaction N-acetyl-alpha-D-glucosamine 1-phosphate + UTP + H(+) = UDP-N-acetyl-alpha-D-glucosamine + diphosphate. The protein operates within nucleotide-sugar biosynthesis; UDP-N-acetyl-alpha-D-glucosamine biosynthesis; N-acetyl-alpha-D-glucosamine 1-phosphate from alpha-D-glucosamine 6-phosphate (route II): step 2/2. Its pathway is nucleotide-sugar biosynthesis; UDP-N-acetyl-alpha-D-glucosamine biosynthesis; UDP-N-acetyl-alpha-D-glucosamine from N-acetyl-alpha-D-glucosamine 1-phosphate: step 1/1. It functions in the pathway bacterial outer membrane biogenesis; LPS lipid A biosynthesis. Its function is as follows. Catalyzes the last two sequential reactions in the de novo biosynthetic pathway for UDP-N-acetylglucosamine (UDP-GlcNAc). The C-terminal domain catalyzes the transfer of acetyl group from acetyl coenzyme A to glucosamine-1-phosphate (GlcN-1-P) to produce N-acetylglucosamine-1-phosphate (GlcNAc-1-P), which is converted into UDP-GlcNAc by the transfer of uridine 5-monophosphate (from uridine 5-triphosphate), a reaction catalyzed by the N-terminal domain. The chain is Bifunctional protein GlmU from Zymomonas mobilis subsp. mobilis (strain ATCC 31821 / ZM4 / CP4).